The following is a 248-amino-acid chain: UPF0736 protein BCAH187_A1335 (248 aa).

This sequence belongs to the UPF0736 family.

The protein is UPF0736 protein BCAH187_A1335 of Bacillus cereus (strain AH187).